Here is a 126-residue protein sequence, read N- to C-terminus: Non-specific lipid-transfer protein 15 (126 aa).

The signal sequence occupies residues 1–22 (MSKSIFVVCITLLVVLSPTLNA). Disulfide bonds link C34–C80, C45–C57, C58–C100, and C78–C114.

This sequence belongs to the plant LTP family.

In terms of biological role, plant non-specific lipid-transfer proteins transfer phospholipids as well as galactolipids across membranes. May play a role in wax or cutin deposition in the cell walls of expanding epidermal cells and certain secretory tissues. In Arabidopsis thaliana (Mouse-ear cress), this protein is Non-specific lipid-transfer protein 15 (LTP15).